The chain runs to 98 residues: NADH-ubiquinone oxidoreductase chain 4L (98 aa).

3 consecutive transmembrane segments (helical) span residues 1–21 (MTLVHMNLLLAFAMSLTGLLM), 26–46 (LMSALLCLEGMVLSLFILATI), and 59–79 (MPIILLVFAACEAAIGLALLV).

The protein belongs to the complex I subunit 4L family. Core subunit of respiratory chain NADH dehydrogenase (Complex I) which is composed of 45 different subunits.

It localises to the mitochondrion inner membrane. It carries out the reaction a ubiquinone + NADH + 5 H(+)(in) = a ubiquinol + NAD(+) + 4 H(+)(out). Core subunit of the mitochondrial membrane respiratory chain NADH dehydrogenase (Complex I) which catalyzes electron transfer from NADH through the respiratory chain, using ubiquinone as an electron acceptor. Part of the enzyme membrane arm which is embedded in the lipid bilayer and involved in proton translocation. This chain is NADH-ubiquinone oxidoreductase chain 4L (MT-ND4L), found in Pontoporia blainvillei (Franciscana).